The sequence spans 681 residues: Leucine-rich repeat, immunoglobulin-like domain and transmembrane domain-containing protein 3 (681 aa).

The N-terminal stretch at 1-19 (MWLSACLCLVLSFLGGVNG) is a signal peptide. Asn18 is a glycosylation site (N-linked (GlcNAc...) asparagine). At 20 to 584 (TCPSQCSCEY…RVEGRGSQWS (565 aa)) the chain is on the lumenal side. LRR repeat units follow at residues 56–79 (PVDTSKLRIEKTVVRRLPAEAFYY), 80–103 (LVELQYLWLAYNSVASIETSSFYN), 104–128 (LRQLHELRLDGNSLTAFPWVSLLDM), 129–151 (PHLRTLDLHNNRIASVPNEAVRY), and 152–175 (LRNLTCLDLSSNRLTTLPPDFLDS). The 91-residue stretch at 254 to 344 (PSVMMSATKI…GISEAVVTVT (91 aa)) folds into the Ig-like domain. Residues Cys275 and Cys328 are joined by a disulfide bond. A glycan (N-linked (GlcNAc...) asparagine) is linked at Asn296. Disordered regions lie at residues 350–391 (TTTL…GLTS) and 425–464 (TSVQTSISGRTARTSHQPPLLHPGGKSNAKIEKNGRKFPP). Polar residues predominate over residues 378-391 (TPPSKSWLSPGLTS). 2 N-linked (GlcNAc...) asparagine glycosylation sites follow: Asn485 and Asn506. Residues 585-605 (LLLVVTSTACVIVVPLICFLL) form a helical membrane-spanning segment. The Cytoplasmic segment spans residues 606-681 (YKVCKLQCTS…SDGCRTEYYG (76 aa)).

As to expression, detected in the outer plexiform layer (OPL) of the retina, where it localizes to rod and cone ON-bipolar cells (at protein level). Also detected in bipolar cell bodies in the inner retinal layer (INL) (at protein level).

Its subcellular location is the cell projection. The protein localises to the dendrite. It is found in the perikaryon. It localises to the endoplasmic reticulum membrane. In terms of biological role, plays a role in the synapse formation and synaptic transmission between cone photoreceptor cells and retinal bipolar cells. Required for normal transmission of a light-evoked stimulus from the cone photoreceptor cells to the ON-bipolar cells and ON-ganglion cells in the inner retina. Required in retinal ON-bipolar cells for normal localization of the cation channel TRPM1 at dendrite tips. Seems to play a specific role in synaptic contacts made by ON-bipolar cells with cone photoreceptor pedicles. May also have a role in cone synapse formation. Might facilitate FGFR1 exit from the endoplasmic reticulum to the Golgi. Could be a regulator of the FGFRs. This Mus musculus (Mouse) protein is Leucine-rich repeat, immunoglobulin-like domain and transmembrane domain-containing protein 3.